Consider the following 281-residue polypeptide: sn-glycerol-3-phosphate transport system permease protein UgpE (281 aa).

Helical transmembrane passes span 14-34 (IMLI…FVAA), 85-105 (FAIT…IVYF), 113-133 (FFWL…FPTI), 142-162 (LDSY…TFLF), 201-221 (AALF…PILI), and 247-267 (WNQV…VVLL). The ABC transmembrane type-1 domain maps to 77–268 (LLNSFVMAFA…IPPVVVVLLM (192 aa)).

Belongs to the binding-protein-dependent transport system permease family. UgpAE subfamily. The complex is composed of two ATP-binding proteins (UgpC), two transmembrane proteins (UgpA and UgpE) and a solute-binding protein (UgpB).

The protein localises to the cell inner membrane. Part of the ABC transporter complex UgpBAEC involved in sn-glycerol-3-phosphate (G3P) import. Probably responsible for the translocation of the substrate across the membrane. This Yersinia pestis bv. Antiqua (strain Antiqua) protein is sn-glycerol-3-phosphate transport system permease protein UgpE (ugpE).